Reading from the N-terminus, the 278-residue chain is 4-deoxy-L-threo-5-hexosulose-uronate ketol-isomerase (278 aa).

Zn(2+) is bound by residues His196, His198, Glu203, and His245.

The protein belongs to the KduI family. Homohexamer. Requires Zn(2+) as cofactor.

It carries out the reaction 5-dehydro-4-deoxy-D-glucuronate = 3-deoxy-D-glycero-2,5-hexodiulosonate. It participates in glycan metabolism; pectin degradation; 2-dehydro-3-deoxy-D-gluconate from pectin: step 4/5. In terms of biological role, catalyzes the isomerization of 5-dehydro-4-deoxy-D-glucuronate to 3-deoxy-D-glycero-2,5-hexodiulosonate. The protein is 4-deoxy-L-threo-5-hexosulose-uronate ketol-isomerase of Escherichia coli (strain 55989 / EAEC).